Consider the following 544-residue polypeptide: CTP synthase (544 aa).

Residues 1–267 (MAKFVFITGG…AQRVLQILNL (267 aa)) form an amidoligase domain region. S13 is a binding site for CTP. Residue S13 participates in UTP binding. Position 14–19 (14–19 (SIGKGI)) interacts with ATP. Y54 is an L-glutamine binding site. D71 provides a ligand contact to ATP. Residues D71 and E141 each coordinate Mg(2+). CTP contacts are provided by residues 148-150 (DIE), 188-193 (KTKPTQ), and K224. UTP-binding positions include 188–193 (KTKPTQ) and K224. In terms of domain architecture, Glutamine amidotransferase type-1 spans 292-534 (EIAIVGKYVR…IEAALRSRSR (243 aa)). G354 serves as a coordination point for L-glutamine. C381 (nucleophile; for glutamine hydrolysis) is an active-site residue. L-glutamine contacts are provided by residues 382 to 385 (LGMQ), E405, and R462. Catalysis depends on residues H507 and E509.

It belongs to the CTP synthase family. Homotetramer.

The enzyme catalyses UTP + L-glutamine + ATP + H2O = CTP + L-glutamate + ADP + phosphate + 2 H(+). It carries out the reaction L-glutamine + H2O = L-glutamate + NH4(+). It catalyses the reaction UTP + NH4(+) + ATP = CTP + ADP + phosphate + 2 H(+). The protein operates within pyrimidine metabolism; CTP biosynthesis via de novo pathway; CTP from UDP: step 2/2. With respect to regulation, allosterically activated by GTP, when glutamine is the substrate; GTP has no effect on the reaction when ammonia is the substrate. The allosteric effector GTP functions by stabilizing the protein conformation that binds the tetrahedral intermediate(s) formed during glutamine hydrolysis. Inhibited by the product CTP, via allosteric rather than competitive inhibition. Catalyzes the ATP-dependent amination of UTP to CTP with either L-glutamine or ammonia as the source of nitrogen. Regulates intracellular CTP levels through interactions with the four ribonucleotide triphosphates. This Synechococcus sp. (strain JA-3-3Ab) (Cyanobacteria bacterium Yellowstone A-Prime) protein is CTP synthase.